A 219-amino-acid polypeptide reads, in one-letter code: Protein-L-isoaspartate O-methyltransferase (219 aa).

Ser-64 is a catalytic residue.

This sequence belongs to the methyltransferase superfamily. L-isoaspartyl/D-aspartyl protein methyltransferase family.

The protein resides in the cytoplasm. The enzyme catalyses [protein]-L-isoaspartate + S-adenosyl-L-methionine = [protein]-L-isoaspartate alpha-methyl ester + S-adenosyl-L-homocysteine. Its function is as follows. Catalyzes the methyl esterification of L-isoaspartyl residues in peptides and proteins that result from spontaneous decomposition of normal L-aspartyl and L-asparaginyl residues. It plays a role in the repair and/or degradation of damaged proteins. This chain is Protein-L-isoaspartate O-methyltransferase, found in Chlorobaculum parvum (strain DSM 263 / NCIMB 8327) (Chlorobium vibrioforme subsp. thiosulfatophilum).